A 585-amino-acid polypeptide reads, in one-letter code: MSHDMTSRELYLRLLTYVRPYWKAFLAALACMGVASLAEPVFPAIMKSLLDDGFSKANGPWDWLFYPLAIMGIFLVRAIFGFLGDYLMSWVSNNVVAELRQAMFARMVRLPTRYYSDNLSGRLMSRIAYDVTGVAGAATNALTSLIKDSLSIVGLLVWLLWLNWQLTLITLSVVPFIAIVVRVFSKRLRSVARGQQESMGKITQVLQEAIEGHKVVKIFGGQSYEEDRFYESIREQRRLAMRATLASAAQSPLVQFFAASGVAIIMGVALKQASSDQTTVGSFVSFVTAMLMLMAPLKRVTDVNAPIQRGLAAAESVFSLVDEETEPDSGKEELGRAQGLVEFDGVTFTYPGSERPALDSVSLTVRPGECVALVGPSGSGKTTAANLLPRFYALDAGEIRVDGHALPNIRLNSLRDNIALVSQDVVLFNDTIGANIAYGGKRDATLDEIRAAAKAAHALEFIDALPEGLNTMIGENGVKLSGGQRQRLAIARAILKDAPILILDEATSALDTESERHVQAALDELMRGRSTLVIAHRLSTIERADRIIALAHGHKQEEGSHAELLAHDGLYARLYRMQKAEEVAV.

Transmembrane regions (helical) follow at residues 25–45 (FLAALACMGVASLAEPVFPAI), 63–83 (WLFYPLAIMGIFLVRAIFGFL), 127–146 (IAYDVTGVAGAATNALTSLI), 150–170 (LSIVGLLVWLLWLNWQLTLIT), 250–270 (QSPLVQFFAASGVAIIMGVAL), and 277–297 (QTTVGSFVSFVTAMLMLMAPL). The 284-residue stretch at 26-309 (LAALACMGVA…VTDVNAPIQR (284 aa)) folds into the ABC transmembrane type-1 domain. The ABC transporter domain maps to 341–577 (VEFDGVTFTY…DGLYARLYRM (237 aa)). 375–382 (GPSGSGKT) provides a ligand contact to ATP.

This sequence belongs to the ABC transporter superfamily. Lipid exporter (TC 3.A.1.106) family. Homodimer.

Its subcellular location is the cell inner membrane. The catalysed reaction is ATP + H2O + lipid A-core oligosaccharideSide 1 = ADP + phosphate + lipid A-core oligosaccharideSide 2.. In terms of biological role, involved in lipopolysaccharide (LPS) biosynthesis. Translocates lipid A-core from the inner to the outer leaflet of the inner membrane. Transmembrane domains (TMD) form a pore in the inner membrane and the ATP-binding domain (NBD) is responsible for energy generation. This is ATP-dependent lipid A-core flippase from Dechloromonas aromatica (strain RCB).